A 540-amino-acid chain; its full sequence is IQ motif and ankyrin repeat domain-containing protein 1 (540 aa).

Over residues 1 to 17 (MSTKKGGPKAASGKGQA) the composition is skewed to low complexity. The tract at residues 1-62 (MSTKKGGPKA…PQAPAAPTAE (62 aa)) is disordered. The region spanning 62-91 (EDKAAIVIQCAFRQYLARRELARRCQERQE) is the IQ domain. 2 ANK repeats span residues 191 to 220 (HGNT…NPNT) and 224 to 253 (FGRT…DPRM). Residues 281 to 388 (LTEAMLKNME…EETLAMARLE (108 aa)) are a coiled coil.

The chain is IQ motif and ankyrin repeat domain-containing protein 1 from Mus musculus (Mouse).